The sequence spans 405 residues: L-carnitine CoA-transferase (405 aa).

CoA is bound by residues Lys-97 and Arg-104. The active-site Nucleophile is Asp-169.

It belongs to the CoA-transferase III family. CaiB subfamily. Homodimer.

It localises to the cytoplasm. The enzyme catalyses crotonobetainyl-CoA + (R)-carnitine = crotonobetaine + (R)-carnitinyl-CoA. The catalysed reaction is 4-(trimethylamino)butanoyl-CoA + (R)-carnitine = (R)-carnitinyl-CoA + 4-(trimethylamino)butanoate. The protein operates within amine and polyamine metabolism; carnitine metabolism. Its function is as follows. Catalyzes the reversible transfer of the CoA moiety from gamma-butyrobetainyl-CoA to L-carnitine to generate L-carnitinyl-CoA and gamma-butyrobetaine. Is also able to catalyze the reversible transfer of the CoA moiety from gamma-butyrobetainyl-CoA or L-carnitinyl-CoA to crotonobetaine to generate crotonobetainyl-CoA. This Escherichia coli (strain 55989 / EAEC) protein is L-carnitine CoA-transferase.